We begin with the raw amino-acid sequence, 229 residues long: 2,3-bisphosphoglycerate-dependent phosphoglycerate mutase 2 (229 aa).

Substrate is bound by residues 8–15, 21–22, R60, 87–90, K98, 114–115, and 183–184; these read RHGQSEWN, TG, ERHY, RR, and GN. The Tele-phosphohistidine intermediate role is filled by H9. E87 functions as the Proton donor/acceptor in the catalytic mechanism.

Belongs to the phosphoglycerate mutase family. BPG-dependent PGAM subfamily.

It catalyses the reaction (2R)-2-phosphoglycerate = (2R)-3-phosphoglycerate. It participates in carbohydrate degradation; glycolysis; pyruvate from D-glyceraldehyde 3-phosphate: step 3/5. Its function is as follows. Catalyzes the interconversion of 2-phosphoglycerate and 3-phosphoglycerate. This Latilactobacillus sakei subsp. sakei (strain 23K) (Lactobacillus sakei subsp. sakei) protein is 2,3-bisphosphoglycerate-dependent phosphoglycerate mutase 2.